Consider the following 158-residue polypeptide: Transcriptional repressor NrdR (158 aa).

Residues 3–34 (CPSCQNTDSRVLESRAADAGRSVRRRRECLHC) fold into a zinc finger. In terms of domain architecture, ATP-cone spans 49–139 (ITVLKRNGNR…VYRHFRGIND (91 aa)).

Belongs to the NrdR family. The cofactor is Zn(2+).

Negatively regulates transcription of bacterial ribonucleotide reductase nrd genes and operons by binding to NrdR-boxes. This is Transcriptional repressor NrdR from Prochlorococcus marinus (strain MIT 9303).